Here is a 128-residue protein sequence, read N- to C-terminus: MIKLRLKRFGKKREASFRLVACNSTSRRDGRPLQELGFYNPRTKETRLDAEALRVRLSQGAQPTDAVRFLLEKGGLLEKTVRPAETIGKLKQAAAREAAVKQAAKDAAEAKAAAANESDDSGTDSTES.

A disordered region spans residues 107 to 128; the sequence is AAEAKAAAANESDDSGTDSTES. Over residues 117 to 128 the composition is skewed to acidic residues; it reads ESDDSGTDSTES.

The protein belongs to the bacterial ribosomal protein bS16 family.

The polypeptide is Small ribosomal subunit protein bS16 (Synechococcus sp. (strain CC9311)).